The sequence spans 375 residues: Alanine racemase (375 aa).

Residue Lys41 is the Proton acceptor; specific for D-alanine of the active site. Lys41 is modified (N6-(pyridoxal phosphate)lysine). Arg141 is a binding site for substrate. The active-site Proton acceptor; specific for L-alanine is Tyr270. Position 317 (Met317) interacts with substrate.

It belongs to the alanine racemase family. Pyridoxal 5'-phosphate is required as a cofactor.

It catalyses the reaction L-alanine = D-alanine. Its pathway is amino-acid biosynthesis; D-alanine biosynthesis; D-alanine from L-alanine: step 1/1. Catalyzes the interconversion of L-alanine and D-alanine. May also act on other amino acids. The protein is Alanine racemase (alr) of Lactiplantibacillus plantarum (strain ATCC BAA-793 / NCIMB 8826 / WCFS1) (Lactobacillus plantarum).